We begin with the raw amino-acid sequence, 247 residues long: Orotidine 5'-phosphate decarboxylase (247 aa).

Substrate-binding positions include aspartate 22, lysine 44, 71–80 (DLKFHDIPNT), threonine 131, arginine 192, glutamine 201, glycine 221, and arginine 222. Lysine 73 serves as the catalytic Proton donor.

This sequence belongs to the OMP decarboxylase family. Type 1 subfamily. In terms of assembly, homodimer.

The catalysed reaction is orotidine 5'-phosphate + H(+) = UMP + CO2. It functions in the pathway pyrimidine metabolism; UMP biosynthesis via de novo pathway; UMP from orotate: step 2/2. Functionally, catalyzes the decarboxylation of orotidine 5'-monophosphate (OMP) to uridine 5'-monophosphate (UMP). This chain is Orotidine 5'-phosphate decarboxylase, found in Pectobacterium carotovorum subsp. carotovorum (strain PC1).